A 420-amino-acid polypeptide reads, in one-letter code: Putative kinase Y4mE (420 aa).

The Proton acceptor role is filled by D302.

It belongs to the HipA Ser/Thr kinase family.

The polypeptide is Putative kinase Y4mE (Sinorhizobium fredii (strain NBRC 101917 / NGR234)).